Reading from the N-terminus, the 823-residue chain is MKFGTFSLPRQIPTCKGGRFTRVLQSIGSVIREFSASANALQDCWKNGNESKEIDDVHTLFRYCTNLQSAKCLHARLVVSKQIQNVCISAKLVNLYCYLGNVALARHTFDHIQNRDVYAWNLMISGYGRAGNSSEVIRCFSLFMLSSGLTPDYRTFPSVLKACRTVIDGNKIHCLALKFGFMWDVYVAASLIHLYSRYKAVGNARILFDEMPVRDMGSWNAMISGYCQSGNAKEALTLSNGLRAMDSVTVVSLLSACTEAGDFNRGVTIHSYSIKHGLESELFVSNKLIDLYAEFGRLRDCQKVFDRMYVRDLISWNSIIKAYELNEQPLRAISLFQEMRLSRIQPDCLTLISLASILSQLGDIRACRSVQGFTLRKGWFLEDITIGNAVVVMYAKLGLVDSARAVFNWLPNTDVISWNTIISGYAQNGFASEAIEMYNIMEEEGEIAANQGTWVSVLPACSQAGALRQGMKLHGRLLKNGLYLDVFVVTSLADMYGKCGRLEDALSLFYQIPRVNSVPWNTLIACHGFHGHGEKAVMLFKEMLDEGVKPDHITFVTLLSACSHSGLVDEGQWCFEMMQTDYGITPSLKHYGCMVDMYGRAGQLETALKFIKSMSLQPDASIWGALLSACRVHGNVDLGKIASEHLFEVEPEHVGYHVLLSNMYASAGKWEGVDEIRSIAHGKGLRKTPGWSSMEVDNKVEVFYTGNQTHPMYEEMYRELTALQAKLKMIGYVPDHRFVLQDVEDDEKEHILMSHSERLAIAFALIATPAKTTIRIFKNLRVCGDCHSVTKFISKITEREIIVRDSNRFHHFKNGVCSCGDYW.

PPR repeat units follow at residues 85-115 (NVCISAKLVNLYCYLGNVALARHTFDHIQNR), 116-151 (DVYAWNLMISGYGRAGNSSEVIRCFSLFMLSSGLTP), 152-183 (DYRTFPSVLKACRTVIDGNKIHCLALKFGFMW), 184-214 (DVYVAASLIHLYSRYKAVGNARILFDEMPVR), 215-249 (DMGSWNAMISGYCQSGNAKEALTLSNGLRAMDSVT), 252-280 (SLLSACTEAGDFNRGVTIHSYSIKHGLES), 281-311 (ELFVSNKLIDLYAEFGRLRDCQKVFDRMYVR), 312-346 (DLISWNSIIKAYELNEQPLRAISLFQEMRLSRIQP), 347-381 (DCLTLISLASILSQLGDIRACRSVQGFTLRKGWFL), 383-413 (DITIGNAVVVMYAKLGLVDSARAVFNWLPNT), 414-448 (DVISWNTIISGYAQNGFASEAIEMYNIMEEEGEIA), 450-484 (NQGTWVSVLPACSQAGALRQGMKLHGRLLKNGLYL), 485-515 (DVFVVTSLADMYGKCGRLEDALSLFYQIPRV), 516-550 (NSVPWNTLIACHGFHGHGEKAVMLFKEMLDEGVKP), 551-581 (DHITFVTLLSACSHSGLVDEGQWCFEMMQTD), and 587-617 (SLKHYGCMVDMYGRAGQLETALKFIKSMSLQ). Positions 622-697 (IWGALLSACR…TPGWSSMEVD (76 aa)) are type E motif. A type E(+) motif region spans residues 698 to 728 (NKVEVFYTGNQTHPMYEEMYRELTALQAKLK). Residues 729 to 823 (MIGYVPDHRF…NGVCSCGDYW (95 aa)) form a type DYW motif region.

It belongs to the PPR family. PCMP-H subfamily.

This chain is Pentatricopeptide repeat-containing protein At4g33990 (EMB2758), found in Arabidopsis thaliana (Mouse-ear cress).